The sequence spans 76 residues: Small proline-rich protein 4 (76 aa).

The interval 38–76 is disordered; that stretch reads PKTKDPCVPQAKKQCPARSTTNPAQEKCPAQQDPKCKQK.

The protein belongs to the cornifin (SPRR) family. Cross-linked to membrane proteins by transglutaminase.

Its subcellular location is the cytoplasm. It localises to the cell cortex. In terms of biological role, cross-linked envelope protein of keratinocytes. Involved in UV-induced cornification. This Mus musculus (Mouse) protein is Small proline-rich protein 4 (Sprr4).